The chain runs to 316 residues: CD276 antigen (316 aa).

Residues 1–28 (MLRGWGGPSVGVSMGTALGVLCLCLTGA) form the signal peptide. Residues 29 to 139 (VEVQVSEDPV…DSAAVSLQVA (111 aa)) form the Ig-like V-type domain. At 29 to 248 (VEVQVSEDPV…GQPMTFPPEA (220 aa)) the chain is on the extracellular side. N-linked (GlcNAc...) asparagine glycans are attached at residues asparagine 104, asparagine 189, and asparagine 215. The Ig-like C2-type domain maps to 145-238 (PSMTLEPNKD…QDAHGSVTIT (94 aa)). Cysteine 165 and cysteine 220 form a disulfide bridge. Residues 249–269 (LWVTVGLSVCLVILLVALAFV) traverse the membrane as a helical segment. Residues 270 to 316 (CWRKIKQSCEEENAGAEDQDGDGEGSKTALRPLKHSENKEDDGQEIA) are Cytoplasmic-facing. Residues 281-292 (ENAGAEDQDGDG) show a composition bias toward acidic residues. The segment at 281–316 (ENAGAEDQDGDGEGSKTALRPLKHSENKEDDGQEIA) is disordered.

Belongs to the immunoglobulin superfamily. BTN/MOG family. As to quaternary structure, interacts with TREML2 and this interaction enhances T-cell activation.

The protein resides in the membrane. Modulates T-cell-mediated immune responses and the development of acute and chronic transplant rejection. May play a positive regulatory role in bone formation and has a dual role in the bone-immune interface. Induces antitumor immunity as it activates both acquired and innate immunity leading to natural killer cell and CD8 T-cell dependent killing of tumor cells. This is CD276 antigen (Cd276) from Rattus norvegicus (Rat).